Consider the following 354-residue polypeptide: DNA polymerase IV (354 aa).

Positions 8 to 189 constitute a UmuC domain; sequence IIHVDMDCFY…LPLEKIPGVG (182 aa). Mg(2+)-binding residues include Asp12 and Asp107. Glu108 is an active-site residue.

The protein belongs to the DNA polymerase type-Y family. As to quaternary structure, monomer. Mg(2+) serves as cofactor.

The protein localises to the cytoplasm. It carries out the reaction DNA(n) + a 2'-deoxyribonucleoside 5'-triphosphate = DNA(n+1) + diphosphate. Functionally, poorly processive, error-prone DNA polymerase involved in untargeted mutagenesis. Copies undamaged DNA at stalled replication forks, which arise in vivo from mismatched or misaligned primer ends. These misaligned primers can be extended by PolIV. Exhibits no 3'-5' exonuclease (proofreading) activity. May be involved in translesional synthesis, in conjunction with the beta clamp from PolIII. This Vibrio parahaemolyticus serotype O3:K6 (strain RIMD 2210633) protein is DNA polymerase IV.